A 293-amino-acid chain; its full sequence is Ribosomal RNA small subunit methyltransferase A (293 aa).

N33, V35, G60, E81, D111, and N130 together coordinate S-adenosyl-L-methionine.

Belongs to the class I-like SAM-binding methyltransferase superfamily. rRNA adenine N(6)-methyltransferase family. RsmA subfamily.

The protein resides in the cytoplasm. The catalysed reaction is adenosine(1518)/adenosine(1519) in 16S rRNA + 4 S-adenosyl-L-methionine = N(6)-dimethyladenosine(1518)/N(6)-dimethyladenosine(1519) in 16S rRNA + 4 S-adenosyl-L-homocysteine + 4 H(+). Specifically dimethylates two adjacent adenosines (A1518 and A1519) in the loop of a conserved hairpin near the 3'-end of 16S rRNA in the 30S particle. May play a critical role in biogenesis of 30S subunits. In Corynebacterium glutamicum (strain R), this protein is Ribosomal RNA small subunit methyltransferase A.